The primary structure comprises 502 residues: Cytochrome P450 2J3 (502 aa).

A heme-binding site is contributed by Cys-448.

Belongs to the cytochrome P450 family. The cofactor is heme. As to expression, abundantly expressed in heart and liver.

The protein localises to the endoplasmic reticulum membrane. The protein resides in the microsome membrane. It carries out the reaction an organic molecule + reduced [NADPH--hemoprotein reductase] + O2 = an alcohol + oxidized [NADPH--hemoprotein reductase] + H2O + H(+). In terms of biological role, this enzyme metabolizes arachidonic acid predominantly via a NADPH-dependent olefin epoxidation mainly to 14,15-, 11,12-, and 8,9-epoxyeicosatrienoic acids (EET). It also acts as an omega-1-hydroxylase by metabolizing arachidonic acid to 19-hydroxyeicosatetraenoic acid (19-OH-AA). The sequence is that of Cytochrome P450 2J3 (Cyp2j3) from Rattus norvegicus (Rat).